We begin with the raw amino-acid sequence, 129 residues long: Follitropin subunit beta (129 aa).

The first 20 residues, 1 to 20 (MKSVQFCFLFCCWRAICCRS), serve as a signal peptide directing secretion. 6 disulfide bridges follow: Cys-21–Cys-69, Cys-35–Cys-84, Cys-38–Cys-122, Cys-46–Cys-100, Cys-50–Cys-102, and Cys-105–Cys-112. N-linked (GlcNAc...) asparagine glycans are attached at residues Asn-25 and Asn-42.

It belongs to the glycoprotein hormones subunit beta family. As to quaternary structure, heterodimer. The active follitropin is a heterodimer composed of an alpha chain/CGA shared with other hormones and a unique beta chain/FSHB shown here.

The protein localises to the secreted. Together with the alpha chain CGA constitutes follitropin, the follicle-stimulating hormone, and provides its biological specificity to the hormone heterodimer. Binds FSHR, a G protein-coupled receptor, on target cells to activate downstream signaling pathways. Follitropin is involved in follicle development and spermatogenesis in reproductive organs. This chain is Follitropin subunit beta (FSHB), found in Bos taurus (Bovine).